The primary structure comprises 197 residues: Putative phosphopantothenoylcysteine decarboxylase (197 aa).

Residues F52 and 102–105 (SANT) contribute to the FMN site. N139 provides a ligand contact to substrate. C174 (proton donor) is an active-site residue.

The protein belongs to the HFCD (homooligomeric flavin containing Cys decarboxylase) superfamily. As to quaternary structure, homotrimer. FMN is required as a cofactor.

It carries out the reaction N-[(R)-4-phosphopantothenoyl]-L-cysteine + H(+) = (R)-4'-phosphopantetheine + CO2. Its pathway is cofactor biosynthesis; coenzyme A biosynthesis; CoA from (R)-pantothenate: step 3/5. Its function is as follows. Necessary for the biosynthesis of coenzyme A. Catalyzes the decarboxylation of 4-phosphopantothenoylcysteine to form 4'-phosphopantotheine. The chain is Putative phosphopantothenoylcysteine decarboxylase (ppcdc) from Dictyostelium discoideum (Social amoeba).